Reading from the N-terminus, the 116-residue chain is Large ribosomal subunit protein bL17 (116 aa).

The protein belongs to the bacterial ribosomal protein bL17 family. As to quaternary structure, part of the 50S ribosomal subunit. Contacts protein L32.

This is Large ribosomal subunit protein bL17 from Trichormus variabilis (strain ATCC 29413 / PCC 7937) (Anabaena variabilis).